The following is a 311-amino-acid chain: Protoheme IX farnesyltransferase (311 aa).

Transmembrane regions (helical) follow at residues 38–58, 62–82, 113–133, 134–154, 162–182, 188–208, 230–250, 251–271, and 286–306; these read IKVVALLVLTALVGLALAPDM, YFVQLLSLFGIGLLSSSAAVI, LIFSAVIGTLGFSLLVFAANW, LTAQMTLFALVGYAFVYTMFL, IVIGGLAGAMPPLLGWISETG, PWILVMIIFTWTPPHFWALAI, FTKTCILLYSLLLTVVCFLPF, LIHMSGYLYLFVAMLINIIFI, and ALNLFKYSILHLTLLFIALFA.

This sequence belongs to the UbiA prenyltransferase family. Protoheme IX farnesyltransferase subfamily.

It localises to the cell inner membrane. The enzyme catalyses heme b + (2E,6E)-farnesyl diphosphate + H2O = Fe(II)-heme o + diphosphate. Its pathway is porphyrin-containing compound metabolism; heme O biosynthesis; heme O from protoheme: step 1/1. Functionally, converts heme B (protoheme IX) to heme O by substitution of the vinyl group on carbon 2 of heme B porphyrin ring with a hydroxyethyl farnesyl side group. This is Protoheme IX farnesyltransferase from Psychromonas ingrahamii (strain DSM 17664 / CCUG 51855 / 37).